The following is a 547-amino-acid chain: Sodium-coupled neutral amino acid transporter 4 (547 aa).

The disordered stretch occupies residues 1–30 (MDPMELRNVNIEPDDESSSGESAPDSYIGI). Residues 1 to 104 (MDPMELRNVN…GLSYAMANTG (104 aa)) lie on the Extracellular side of the membrane. Ser-49 is modified (phosphoserine). Residues 105–125 (IILFIIMLLAVAILSLYSVHL) form a helical membrane-spanning segment. The Cytoplasmic segment spans residues 126-151 (LLKTAKEGGSLIYEKLGEKAFGWPGK). The helical transmembrane segment at 152-172 (IGAFVSITMQNIGAMSSYLFI) threads the bilayer. The Extracellular portion of the chain corresponds to 173–195 (IKYELPEVIRAFMGLEENTGEWY). Residues 196 to 216 (LNGNYLIIFVSVGIILPLSLL) form a helical membrane-spanning segment. Over 217–220 (KNLG) the chain is Cytoplasmic. The chain crosses the membrane as a helical span at residues 221–241 (YLGYTSGFSLTCMVFFVSVVI). Residues 242 to 332 (YKKFQIPCPL…PKYFVFNSRT (91 aa)) lie on the Extracellular side of the membrane. A disulfide bridge connects residues Cys-249 and Cys-321. N-linked (GlcNAc...) asparagine glycans are attached at residues Asn-260, Asn-264, and Asn-276. Residues 333-353 (AYAIPILVFAFVCHPEVLPIY) traverse the membrane as a helical segment. The Cytoplasmic portion of the chain corresponds to 354–369 (SELKDRSRRKMQTVSN). The chain crosses the membrane as a helical span at residues 370–390 (ISITGMLVMYLLAALFGYLTF). Residues 391–411 (YGEVEDELLHAYSKVYTLDIP) lie on the Extracellular side of the membrane. The helical transmembrane segment at 412-432 (LLMVRLAVLVAVTLTVPIVLF) threads the bilayer. The Cytoplasmic segment spans residues 433 to 453 (PIRTSVITLLFPKRPFSWIRH). A helical membrane pass occupies residues 454–474 (FLIAAVLIALNNVLVILVPTI). The Extracellular segment spans residues 475–476 (KY). The helical transmembrane segment at 477–497 (IFGFIGASSATMLIFILPAVF) threads the bilayer. Residues 498-514 (YLKLVKKETFRSPQKVG) are Cytoplasmic-facing. A helical membrane pass occupies residues 515-535 (ALIFLVVGIFFMIGSMALIII). Topologically, residues 536–547 (DWIYDPPNSKHH) are extracellular.

Belongs to the amino acid/polyamine transporter 2 family. In terms of processing, the disulfide bond plays an important role in substrate transport, but has no effect on trafficking to the cell surface. In terms of tissue distribution, expressed almost exclusively in embryonic and adult liver, and at lower levels in the kidney. Expressed at lower levels in adult muscle and pancreas. Detected in fetal blood vessels. Expressed in syncytiotrophoblas of placenta during first trimester and at term. Highly expressed in first trimester placenta compared to term placenta.

The protein localises to the cell membrane. It is found in the cell projection. The protein resides in the microvillus membrane. The catalysed reaction is L-methionine(in) + Na(+)(in) = L-methionine(out) + Na(+)(out). The enzyme catalyses L-asparagine(in) + Na(+)(in) = L-asparagine(out) + Na(+)(out). It carries out the reaction L-threonine(in) + Na(+)(in) = L-threonine(out) + Na(+)(out). It catalyses the reaction L-serine(in) + Na(+)(in) = L-serine(out) + Na(+)(out). The catalysed reaction is glycine(in) + Na(+)(in) = glycine(out) + Na(+)(out). The enzyme catalyses L-alanine(in) + Na(+)(in) = L-alanine(out) + Na(+)(out). It carries out the reaction L-glutamine(in) + Na(+)(in) = L-glutamine(out) + Na(+)(out). It catalyses the reaction L-histidine(in) + Na(+)(in) = L-histidine(out) + Na(+)(out). The catalysed reaction is L-cysteine(in) + Na(+)(in) = L-cysteine(out) + Na(+)(out). The enzyme catalyses L-proline(in) + Na(+)(in) = L-proline(out) + Na(+)(out). Its function is as follows. Symporter that cotransports neutral amino acids and sodium ions from the extraccellular to the intracellular side of the cell membrane. The transport is electrogenic, pH dependent and partially tolerates substitution of Na(+) by Li(+). Preferentially transports smaller amino acids, such as glycine, L-alanine, L-serine, L-asparagine and L-threonine, followed by L-cysteine, L-histidine, L-proline and L-glutamine and L-methionine. The polypeptide is Sodium-coupled neutral amino acid transporter 4 (Homo sapiens (Human)).